Reading from the N-terminus, the 387-residue chain is Probable peptidoglycan glycosyltransferase FtsW (387 aa).

A run of 9 helical transmembrane segments spans residues 20–40 (LYLLGAAVALMGLGWVMVGSA), 61–81 (LFLLLGLVTAFGVWRIRLAFW), 86–106 (PVMLLLGLGLLLLTLIPGIGV), 149–169 (TIRGFLFPVGVFAMAGLLLLL), 172–192 (DFGAVVVLFATLLGMLFLGGA), 194–214 (LWHFLLLAALGGASLAALAWY), 284–304 (LMGSLAVIALFVVFIYRVLLI), 322–342 (GLGIWIGLQAFINLGVNMGVL), and 349–369 (LPLMSAGGSSSIVTCVAVALI).

This sequence belongs to the SEDS family. FtsW subfamily.

It is found in the cell inner membrane. It carries out the reaction [GlcNAc-(1-&gt;4)-Mur2Ac(oyl-L-Ala-gamma-D-Glu-L-Lys-D-Ala-D-Ala)](n)-di-trans,octa-cis-undecaprenyl diphosphate + beta-D-GlcNAc-(1-&gt;4)-Mur2Ac(oyl-L-Ala-gamma-D-Glu-L-Lys-D-Ala-D-Ala)-di-trans,octa-cis-undecaprenyl diphosphate = [GlcNAc-(1-&gt;4)-Mur2Ac(oyl-L-Ala-gamma-D-Glu-L-Lys-D-Ala-D-Ala)](n+1)-di-trans,octa-cis-undecaprenyl diphosphate + di-trans,octa-cis-undecaprenyl diphosphate + H(+). It participates in cell wall biogenesis; peptidoglycan biosynthesis. In terms of biological role, peptidoglycan polymerase that is essential for cell division. The sequence is that of Probable peptidoglycan glycosyltransferase FtsW from Nitrosococcus halophilus (strain Nc4).